The chain runs to 136 residues: MAREFSRTQRVAQEMQKEIAIILQREVKDPRIGMATVSGVEVSRDLAYAKVFVTFLNVLTEEHDSDVVKNGIKALNEASGFIRSLLGKAMRLRVVPELTFSYDNSLVEGMRMSNLVTNVVKNDEQRRASTDHKEEK.

Belongs to the RbfA family. Monomer. Binds 30S ribosomal subunits, but not 50S ribosomal subunits or 70S ribosomes.

It localises to the cytoplasm. In terms of biological role, one of several proteins that assist in the late maturation steps of the functional core of the 30S ribosomal subunit. Associates with free 30S ribosomal subunits (but not with 30S subunits that are part of 70S ribosomes or polysomes). Required for efficient processing of 16S rRNA. May interact with the 5'-terminal helix region of 16S rRNA. This is Ribosome-binding factor A from Photorhabdus laumondii subsp. laumondii (strain DSM 15139 / CIP 105565 / TT01) (Photorhabdus luminescens subsp. laumondii).